Here is a 137-residue protein sequence, read N- to C-terminus: Proofreading thioesterase EntH (137 aa).

The active-site Nucleophile or proton acceptor is E63.

It belongs to the thioesterase PaaI family. Homotetramer. Dimer of dimers. Interacts specifically with the aryl carrier protein (ArCP) domain of EntB.

The protein localises to the cytoplasm. It participates in siderophore biosynthesis; enterobactin biosynthesis. In terms of biological role, required for optimal enterobactin synthesis. Acts as a proofreading enzyme that prevents EntB misacylation by hydrolyzing the thioester bound existing between EntB and wrongly charged molecules. This is Proofreading thioesterase EntH from Salmonella paratyphi B (strain ATCC BAA-1250 / SPB7).